The sequence spans 509 residues: Diacylglycerol kinase 5 (509 aa).

Residues 36-187 (TPASPVLVFI…IDNWHILMRM (152 aa)) form the DAGKc domain. Positions 439–452 (RSVFDPSTPRHQDG) are enriched in basic and acidic residues. A disordered region spans residues 439–509 (RSVFDPSTPR…SNVHGWSHVL (71 aa)). Over residues 453–467 (AEDYDDNEDDSVAEG) the composition is skewed to acidic residues. Positions 468–489 (EEFRKFGAADTFKIPDEGEHSN) are enriched in basic and acidic residues. Positions 490–500 (KKGRASRRRNS) are enriched in basic residues.

Belongs to the eukaryotic diacylglycerol kinase family. As to quaternary structure, monomer.

The catalysed reaction is a 1,2-diacyl-sn-glycerol + ATP = a 1,2-diacyl-sn-glycero-3-phosphate + ADP + H(+). In terms of biological role, phosphorylates the second messenger diacylglycerol (DAG) to generate phosphatidic acid (PA), another important signaling molecule. PA is required for plant development and responses to abiotic stress and pathogen attack. May be involved in the accumulation of PA during cold stress. The sequence is that of Diacylglycerol kinase 5 (DGK5) from Arabidopsis thaliana (Mouse-ear cress).